The sequence spans 882 residues: Valine--tRNA ligase (882 aa).

The 'HIGH' region signature appears at 45 to 55 (PNVTGKLHLGH). Residues 519–523 (KMSKS) carry the 'KMSKS' region motif. Residue lysine 522 participates in ATP binding. A coiled-coil region spans residues 808–882 (LADLLNVEEE…RIAEMHKLVK (75 aa)).

It belongs to the class-I aminoacyl-tRNA synthetase family. ValS type 1 subfamily. Monomer.

It localises to the cytoplasm. It carries out the reaction tRNA(Val) + L-valine + ATP = L-valyl-tRNA(Val) + AMP + diphosphate. In terms of biological role, catalyzes the attachment of valine to tRNA(Val). As ValRS can inadvertently accommodate and process structurally similar amino acids such as threonine, to avoid such errors, it has a 'posttransfer' editing activity that hydrolyzes mischarged Thr-tRNA(Val) in a tRNA-dependent manner. This Streptococcus pyogenes serotype M18 (strain MGAS8232) protein is Valine--tRNA ligase.